Reading from the N-terminus, the 288-residue chain is Polyamine aminopropyltransferase (288 aa).

The PABS domain occupies 9–238 (ETLHDQFGQY…GIMTFAWATD (230 aa)). Gln-33 provides a ligand contact to S-methyl-5'-thioadenosine. Residues His-64 and Asp-88 each contribute to the spermidine site. S-methyl-5'-thioadenosine-binding positions include Glu-108 and 140 to 141 (DG). Catalysis depends on Asp-158, which acts as the Proton acceptor. 158-161 (DCTD) provides a ligand contact to spermidine. An S-methyl-5'-thioadenosine-binding site is contributed by Pro-165.

The protein belongs to the spermidine/spermine synthase family. As to quaternary structure, homodimer or homotetramer.

It is found in the cytoplasm. It catalyses the reaction S-adenosyl 3-(methylsulfanyl)propylamine + putrescine = S-methyl-5'-thioadenosine + spermidine + H(+). The protein operates within amine and polyamine biosynthesis; spermidine biosynthesis; spermidine from putrescine: step 1/1. Functionally, catalyzes the irreversible transfer of a propylamine group from the amino donor S-adenosylmethioninamine (decarboxy-AdoMet) to putrescine (1,4-diaminobutane) to yield spermidine. The chain is Polyamine aminopropyltransferase from Shigella boydii serotype 18 (strain CDC 3083-94 / BS512).